Reading from the N-terminus, the 345-residue chain is MVHNKNNTILKMIKGEETSHTPVWFMRQAGRSQPEYRKLKEKYSLFDITHQPELCAYVTHLPVDNYHTDAAILYKDIMTPLKPIGVDVEIKSGIGPVIHNPIKTIQDVEKLSQIDPERDVPYVLDTIKLLTEEKLNVPLIGFTGAPFTLASYMIEGGPSKNYNFTKAMMYRDEATWFALMNHLVDVSVKYVTAQVEAGAELIQIFDSWVGALNVEDYRRYIKPHMIRLISEVKGKHDVPVILFGVGASHLINEWNDLPIDVLGLDWRTSINQAQQLGVTKTLQGNLDPSILLAPWNVIEERLKPILDQGMENGKHIFNLGHGVFPEVQPETLRKVSEFVHTYTQR.

Residues 27–31, F46, D76, Y152, S207, and H321 contribute to the substrate site; that span reads RQAGR.

Belongs to the uroporphyrinogen decarboxylase family. In terms of assembly, homodimer.

It is found in the cytoplasm. It carries out the reaction uroporphyrinogen III + 4 H(+) = coproporphyrinogen III + 4 CO2. The protein operates within porphyrin-containing compound metabolism; protoporphyrin-IX biosynthesis; coproporphyrinogen-III from 5-aminolevulinate: step 4/4. In terms of biological role, catalyzes the decarboxylation of four acetate groups of uroporphyrinogen-III to yield coproporphyrinogen-III. This is Uroporphyrinogen decarboxylase from Staphylococcus aureus (strain USA300 / TCH1516).